The chain runs to 146 residues: 3-dehydroquinate dehydratase (146 aa).

Tyrosine 22 (proton acceptor) is an active-site residue. Substrate contacts are provided by asparagine 73, histidine 79, and aspartate 86. Histidine 99 serves as the catalytic Proton donor. Residues 100 to 101 (IS) and arginine 110 each bind substrate.

The protein belongs to the type-II 3-dehydroquinase family. In terms of assembly, homododecamer.

It carries out the reaction 3-dehydroquinate = 3-dehydroshikimate + H2O. It functions in the pathway metabolic intermediate biosynthesis; chorismate biosynthesis; chorismate from D-erythrose 4-phosphate and phosphoenolpyruvate: step 3/7. Functionally, catalyzes a trans-dehydration via an enolate intermediate. The polypeptide is 3-dehydroquinate dehydratase (Prochlorococcus marinus subsp. pastoris (strain CCMP1986 / NIES-2087 / MED4)).